The primary structure comprises 628 residues: MMDGFAQDWPTLTHTDNGLAMDQLGGDLPLDVGFEPQTRARSNTWPCPRPENFVEPTDELDSTKASNQQLAPGDSQQAIQNANAAKKNSSRRNAWGNLSYADLITHAIGSATDKRLTLSQIYEWMVQNVPYFKDKGDSNSSAGWKNSIRHNLSLHNRFMRVQNEGTGKSSWWMLNPEAKPGKSVRRRAASMETSRYEKRRGRAKKRVEALRQAGVVGLNDATPSPSSSVSEGLDHFPESPLHSGGGFQLSPDFRQRASSNASSCGRLSPIRAQDLEPDWGFPVDYQNTTMTQAHAQALEELTCSVADELTLCTQQQQQGFSAASGLPSQPPPPPYQPPQHQQAQQQQSPYALNGPAPGYNTLQPQSQCLLHRSLNCSCMHNARDGLSPNSVTTTMSPAYPNSEPSSDSLNTYSNVVLDGPADTAALMVQQQQQQQQQQQQQQQQLSASLEGQCLEVLNNEAQPIDEFNLENFPVGNLECNVEELLQQEMSYGGLLDINIPLATVNTNLVNSSSGPLSISNISNISNISNLSNLSNISNISSNSGSSLNLNQLQAQLQQQQQQQQAQLQQQAQQQQQPHQQHQQQLLLNNNNNSSSSLELATQTASSNLNARVQYSQPSVVTSPPSWVH.

5 disordered regions span residues 39–77 (RARS…DSQQ), 182–205 (KSVR…RAKK), 217–269 (GLND…RLSP), 316–359 (QQQG…APGY), and 389–415 (NSVT…YSNV). A Phosphothreonine; by PKB/AKT1 modification is found at threonine 44. Positions 63-77 (TKASNQQLAPGDSQQ) are enriched in polar residues. At serine 75 the chain carries Phosphoserine. The segment at residues 95–201 (WGNLSYADLI…ETSRYEKRRG (107 aa)) is a DNA-binding region (fork-head). Serine 190 carries the post-translational modification Phosphoserine; by PKB/AKT1. Composition is skewed to polar residues over residues 221–230 (ATPSPSSSVS) and 256–265 (RASSNASSCG). The residue at position 259 (serine 259) is a Phosphoserine; by PKB/AKT1. Residues serine 262, serine 263, and serine 268 each carry the phosphoserine modification. The segment covering 328 to 337 (SQPPPPPYQP) has biased composition (pro residues). The span at 338-351 (PQHQQAQQQQSPYA) shows a compositional bias: low complexity. Residues 402-414 (SEPSSDSLNTYSN) are compositionally biased toward polar residues.

As to quaternary structure, interacts with melt.

It is found in the cytoplasm. The protein localises to the nucleus. Its function is as follows. Transcription factor involved in the regulation of the insulin signaling pathway. Consistently activates both the downstream target Thor\d4EBP and the feedback control target InR. Involved in negative regulation of the cell cycle, modulating cell growth and proliferation. In response to cellular stresses, such as nutrient deprivation or increased levels of reactive oxygen species, foxo is activated and inhibits growth through the action of target genes such as Thor. Foxo activated in the adult fat body can regulate lifespan in adults; an insulin peptide itself may function as one secondary messenger of insulin-regulated aging. Also regulates Lip4, homolog of human acid lipases, thereby acting as a key modulator of lipid metabolism by insulin signaling and integrates insulin responses to glucose and lipid homeostasis. In Drosophila yakuba (Fruit fly), this protein is Forkhead box protein O.